The primary structure comprises 400 residues: Large envelope protein (400 aa).

G2 is lipidated: N-myristoyl glycine; by host. Residues 2-119 (GGWLPKPRKG…PPLRDSHPQA (118 aa)) are pre-S1. Residues 2-174 (GGWLPKPRKG…SSRTGDPAPT (173 aa)) are pre-S. The Virion surface; in external conformation portion of the chain corresponds to 2–181 (GGWLPKPRKG…APTMENITSG (180 aa)). Residues 2–253 (GGWLPKPRKG…PGYRWMCLRR (252 aa)) are Intravirion; in internal conformation-facing. Residues 84–115 (TLTTVPAVPPPASANRQSGRQPTPISPPLRDS) form a disordered region. The segment covering 97-106 (ANRQSGRQPT) has biased composition (polar residues). Positions 120–174 (IKWNSPAFHQALQDPRVKGLYFPAGGSSSGTVSPVPNIASHISSISSRTGDPAPT) are pre-S2. Residues 182-202 (FLGPLLVLQAGFFLLTRILTI) form a helical membrane-spanning segment. Over 203-253 (PQSLDSWWTSLNFLGGSPVCLGQNSQSPTSNHSPTSCPPICPGYRWMCLRR) the chain is Intravirion; in external conformation. The chain crosses the membrane as a helical span at residues 254–274 (FIIFLFILLLCLIFLLVLLDY). The Virion surface segment spans residues 275–348 (QGMLPVCPLI…WASVRFSWLS (74 aa)). An N-linked (GlcNAc...) asparagine; by host glycan is attached at N320. Residues 349–369 (LLVPFVQWFVGLSPTVWLSVI) form a helical membrane-spanning segment. Residues 370–375 (WMMWYW) are Intravirion-facing. A helical transmembrane segment spans residues 376–398 (GPRLYNILSPFIPLLPIFFCLWV). Topologically, residues 399 to 400 (YI) are virion surface.

This sequence belongs to the orthohepadnavirus major surface antigen family. Li-HBsAg interacts with capsid protein and with HDV Large delta antigen. Isoform M associates with host chaperone CANX through its pre-S2 N glycan. This association may be essential for M proper secretion. Isoform M is N-terminally acetylated by host at a ratio of 90%, and N-glycosylated by host at the pre-S2 region. In terms of processing, myristoylated.

Its subcellular location is the virion membrane. The large envelope protein exists in two topological conformations, one which is termed 'external' or Le-HBsAg and the other 'internal' or Li-HBsAg. In its external conformation the protein attaches the virus to cell receptors and thereby initiating infection. This interaction determines the species specificity and liver tropism. This attachment induces virion internalization predominantly through caveolin-mediated endocytosis. The large envelope protein also assures fusion between virion membrane and endosomal membrane. In its internal conformation the protein plays a role in virion morphogenesis and mediates the contact with the nucleocapsid like a matrix protein. Its function is as follows. The middle envelope protein plays an important role in the budding of the virion. It is involved in the induction of budding in a nucleocapsid independent way. In this process the majority of envelope proteins bud to form subviral lipoprotein particles of 22 nm of diameter that do not contain a nucleocapsid. In Hepatitis B virus genotype A3 (isolate Cameroon/CMR983/1994) (HBV-A), this protein is Large envelope protein.